The primary structure comprises 909 residues: Myb-like protein Q (909 aa).

Disordered regions lie at residues 15–65 (TTNN…QQQQ), 84–149 (QQQN…QQIL), and 216–280 (SAPS…KGPW). A compositionally biased stretch (low complexity) spans 17–46 (NNNSNNNNNNNNNNNNNNNNNNNNNINQNH). Over residues 47-56 (QHQHQHHHHQ) the composition is skewed to basic residues. Positions 84 to 126 (QQQNYGESTTSTSMIPPSITTSLTPLTPTLSSQPQNIQQQQQQ) are enriched in low complexity. Positions 127-139 (QHHHQQQHHHHHQ) are enriched in basic residues. Positions 216–226 (SAPSTPLSMSP) are enriched in polar residues. HTH myb-type domains lie at 272–327 (SPGI…SPEV) and 328–378 (RKTN…LKKI). 2 DNA-binding regions (H-T-H motif) span residues 300-323 (WSSI…FNHL) and 351-374 (WTAI…NSTL). Positions 379 to 389 (GGDSKSLNKEK) are enriched in basic and acidic residues. Disordered stretches follow at residues 379–482 (GGDS…NTAI), 497–531 (QTTP…QTQQ), 616–642 (SMEQ…QQQQ), 672–748 (YQQQ…HPIE), and 826–855 (LNTT…IPTP). The segment covering 390-401 (DDDDDDDEDAED) has biased composition (acidic residues). Low complexity-rich tracts occupy residues 415-431 (SSSS…TNSS) and 444-482 (STTT…NTAI). Over residues 497–508 (QTTPNSSPSLSS) the composition is skewed to polar residues. Composition is skewed to low complexity over residues 622–642 (YQQQ…QQQQ), 672–726 (YQQQ…QQQQ), 733–744 (NSNNTDTTFSNS), and 826–851 (LNTT…NNNN).

The protein resides in the nucleus. In Dictyostelium discoideum (Social amoeba), this protein is Myb-like protein Q (mybQ).